Consider the following 523-residue polypeptide: 2-isopropylmalate synthase (523 aa).

One can recognise a Pyruvate carboxyltransferase domain in the interval 5–267 (VIIFDTTLRD…HTAINHQEIW (263 aa)). Mn(2+) is bound by residues Asp-14, His-202, His-204, and Asn-238. The segment at 392–523 (RLDYFSVQSG…QHNENNKETV (132 aa)) is regulatory domain.

The protein belongs to the alpha-IPM synthase/homocitrate synthase family. LeuA type 1 subfamily. Homodimer. Mn(2+) is required as a cofactor.

The protein localises to the cytoplasm. The enzyme catalyses 3-methyl-2-oxobutanoate + acetyl-CoA + H2O = (2S)-2-isopropylmalate + CoA + H(+). The protein operates within amino-acid biosynthesis; L-leucine biosynthesis; L-leucine from 3-methyl-2-oxobutanoate: step 1/4. Functionally, catalyzes the condensation of the acetyl group of acetyl-CoA with 3-methyl-2-oxobutanoate (2-ketoisovalerate) to form 3-carboxy-3-hydroxy-4-methylpentanoate (2-isopropylmalate). The protein is 2-isopropylmalate synthase of Shigella flexneri.